A 127-amino-acid chain; its full sequence is MNFSGKYQLQSQENFEPFMKAIGLPEDLIQKGKDIKGVSEIVHEGKKIKLTITYGPKVVRNEFTLGEECELETMTGEKVKAVVKLEGDNKMVTTFKGIKSVTELNGDTITNTMTLGDIVYKRVSKRI.

Met-1 carries the post-translational modification N-acetylmethionine. Ser-11 carries the phosphoserine modification. Lys-31 and Lys-36 each carry N6-succinyllysine. Ser-39 carries the post-translational modification Phosphoserine. An N6-succinyllysine modification is found at Lys-46. Thr-51 bears the Phosphothreonine mark. N6-succinyllysine is present on residues Lys-57 and Lys-78. Residue Lys-84 is modified to N6-acetyllysine; alternate. An N6-succinyllysine; alternate modification is found at Lys-84. Position 90 is an N6-succinyllysine (Lys-90). Phosphoserine is present on Ser-100. The residue at position 121 (Lys-121) is an N6-succinyllysine.

This sequence belongs to the calycin superfamily. Fatty-acid binding protein (FABP) family.

It is found in the cytoplasm. Functionally, plays a role in lipoprotein-mediated cholesterol uptake in hepatocytes. Binds cholesterol. Binds free fatty acids and their coenzyme A derivatives, bilirubin, and some other small molecules in the cytoplasm. May be involved in intracellular lipid transport. The chain is Fatty acid-binding protein, liver (Fabp1) from Mus musculus (Mouse).